A 369-amino-acid chain; its full sequence is Glutamate 5-kinase (369 aa).

Lys-9 contributes to the ATP binding site. Substrate is bound by residues Ser-49, Asp-136, and Asn-148. ATP contacts are provided by residues 168-169 and 210-216; these read TD and TGGMLTK. The region spanning 275 to 355 is the PUA domain; it reads RGSVYVDEGA…KGVFIHRDDW (81 aa).

The protein belongs to the glutamate 5-kinase family.

It localises to the cytoplasm. The catalysed reaction is L-glutamate + ATP = L-glutamyl 5-phosphate + ADP. The protein operates within amino-acid biosynthesis; L-proline biosynthesis; L-glutamate 5-semialdehyde from L-glutamate: step 1/2. In terms of biological role, catalyzes the transfer of a phosphate group to glutamate to form L-glutamate 5-phosphate. This is Glutamate 5-kinase from Neisseria meningitidis serogroup B (strain ATCC BAA-335 / MC58).